We begin with the raw amino-acid sequence, 824 residues long: Acyl-homoserine lactone acylase QuiP (824 aa).

Positions 1 to 26 (MASPALRHFLPRFGAAAAAASFLSLA) are cleaved as a signal peptide. Residue serine 264 is the Nucleophile of the active site.

This sequence belongs to the peptidase S45 family. Heterodimer of an alpha subunit and a beta subunit processed from the same precursor.

It is found in the periplasm. It carries out the reaction an N-acyl-L-homoserine lactone + H2O = L-homoserine lactone + a carboxylate. Its function is as follows. Catalyzes the deacylation of acyl-homoserine lactone (AHL or acyl-HSL), releasing homoserine lactone (HSL) and the corresponding fatty acid. Possesses a specificity for the degradation of long-chain acyl-HSLs (side chains of seven or more carbons in length). This is Acyl-homoserine lactone acylase QuiP (quiP) from Pseudomonas syringae pv. syringae (strain B728a).